The sequence spans 334 residues: Methionine adenosyltransferase 2 subunit beta (334 aa).

Residues 37 to 40 (TGLL), 60 to 62 (YSR), 71 to 72 (NL), C93, R97, and Y159 contribute to the NADP(+) site. The segment at 319–334 (LWPFLVDKRWRQTVFH) is required for interaction with MAT2A.

This sequence belongs to the dTDP-4-dehydrorhamnose reductase family. MAT2B subfamily. In terms of assembly, heterotrimer; composed of a catalytic mat2a homodimer that binds one regulatory mat2b chain. Heterohexamer; composed of a central, catalytic mat2a homotetramer flanked on either side by a regulatory mat2b chain. NADP binding increases the affinity for mat2a.

Its pathway is amino-acid biosynthesis; S-adenosyl-L-methionine biosynthesis; S-adenosyl-L-methionine from L-methionine: step 1/1. Regulatory subunit of S-adenosylmethionine synthetase 2, an enzyme that catalyzes the formation of S-adenosylmethionine from methionine and ATP. Regulates MAT2A catalytic activity by changing its kinetic properties, increasing its affinity for L-methionine. Can bind NADP (in vitro). The protein is Methionine adenosyltransferase 2 subunit beta (mat2b) of Xenopus laevis (African clawed frog).